The sequence spans 67 residues: Alpha-conotoxin G1.5 (67 aa).

The signal sequence occupies residues Met-1–Ser-21. A propeptide spanning residues Phe-22 to Lys-47 is cleaved from the precursor. Disulfide bonds link Cys-49–Cys-55 and Cys-50–Cys-63. Glutamine amide is present on Gln-65.

Belongs to the conotoxin A superfamily. Expressed by the venom duct.

The protein resides in the secreted. Its function is as follows. Alpha-conotoxins act on postsynaptic membranes, they bind to the nicotinic acetylcholine receptors (nAChR) and thus inhibit them. Globular isomer (C1-C3; C2-C4) selectively inhibits neuronal (non-muscle) nAChR subtypes particularly human alpha-3-beta-2/CHRNA3-CHRNB2 (IC(50)=35.7 nM) and alpha-9-alpha-10/CHRNA9-CHRNA10 nAChRs (IC(50)=569 nM), while the ribbon isomer (C1-C4; C2-C3) shows weak inhibition on alpha-3-beta-2/CHRNA3-CHRNB2, but not on all other receptors tested. This Conus geographus (Geography cone) protein is Alpha-conotoxin G1.5.